Reading from the N-terminus, the 742-residue chain is 5-methyltetrahydropteroyltriglutamate--homocysteine methyltransferase (742 aa).

Residues 18 to 21 (REWK) and K112 contribute to the 5-methyltetrahydropteroyltri-L-glutamate site. Residues 420–422 (IGS) and E473 contribute to the L-homocysteine site. L-methionine-binding positions include 420–422 (IGS) and E473. Position 550 (W550) interacts with 5-methyltetrahydropteroyltri-L-glutamate. L-homocysteine is bound at residue D588. D588 is an L-methionine binding site. E594 lines the 5-methyltetrahydropteroyltri-L-glutamate pocket. Residues H630, C632, and E654 each contribute to the Zn(2+) site. Catalysis depends on H683, which acts as the Proton donor. C715 is a Zn(2+) binding site.

Belongs to the vitamin-B12 independent methionine synthase family. Zn(2+) is required as a cofactor.

It catalyses the reaction 5-methyltetrahydropteroyltri-L-glutamate + L-homocysteine = tetrahydropteroyltri-L-glutamate + L-methionine. It functions in the pathway amino-acid biosynthesis; L-methionine biosynthesis via de novo pathway; L-methionine from L-homocysteine (MetE route): step 1/1. Functionally, catalyzes the transfer of a methyl group from 5-methyltetrahydrofolate to homocysteine resulting in methionine formation. The sequence is that of 5-methyltetrahydropteroyltriglutamate--homocysteine methyltransferase from Staphylococcus aureus (strain JH9).